The chain runs to 51 residues: Protein HokD (51 aa).

The chain crosses the membrane as a helical span at residues 5-25 (KAMLIALIVICLTVIVTALVT).

Belongs to the Hok/Gef family.

The protein resides in the cell inner membrane. Its function is as follows. Toxic component of a type I toxin-antitoxin (TA) system. When overexpressed kills cells within minutes; causes collapse of the transmembrane potential and arrest of respiration. Its toxic effect is probably neutralized by an antisense antitoxin Sok RNA. In Escherichia coli O157:H7, this protein is Protein HokD (hokD).